Here is a 539-residue protein sequence, read N- to C-terminus: O-phosphoserine--tRNA(Cys) ligase (539 aa).

Substrate contacts are provided by residues 188 to 190, 233 to 235, 275 to 276, and asparagine 327; these read HMT, SAS, and YY.

Belongs to the class-II aminoacyl-tRNA synthetase family. O-phosphoseryl-tRNA(Cys) synthetase subfamily. In terms of assembly, homotetramer. Interacts with SepCysS.

It catalyses the reaction tRNA(Cys) + O-phospho-L-serine + ATP = O-phospho-L-seryl-tRNA(Cys) + AMP + diphosphate. Catalyzes the attachment of O-phosphoserine (Sep) to tRNA(Cys). This Methanosarcina acetivorans (strain ATCC 35395 / DSM 2834 / JCM 12185 / C2A) protein is O-phosphoserine--tRNA(Cys) ligase.